We begin with the raw amino-acid sequence, 331 residues long: Tetraacyldisaccharide 4'-kinase (331 aa).

59–66 (FVGGTGKT) lines the ATP pocket.

Belongs to the LpxK family.

The catalysed reaction is a lipid A disaccharide + ATP = a lipid IVA + ADP + H(+). Its pathway is glycolipid biosynthesis; lipid IV(A) biosynthesis; lipid IV(A) from (3R)-3-hydroxytetradecanoyl-[acyl-carrier-protein] and UDP-N-acetyl-alpha-D-glucosamine: step 6/6. Its function is as follows. Transfers the gamma-phosphate of ATP to the 4'-position of a tetraacyldisaccharide 1-phosphate intermediate (termed DS-1-P) to form tetraacyldisaccharide 1,4'-bis-phosphate (lipid IVA). In Alkalilimnicola ehrlichii (strain ATCC BAA-1101 / DSM 17681 / MLHE-1), this protein is Tetraacyldisaccharide 4'-kinase.